Here is a 283-residue protein sequence, read N- to C-terminus: MEMO1 family protein MK0963 (283 aa).

It belongs to the MEMO1 family.

The chain is MEMO1 family protein MK0963 from Methanopyrus kandleri (strain AV19 / DSM 6324 / JCM 9639 / NBRC 100938).